Consider the following 390-residue polypeptide: Zinc transporter 7-B (390 aa).

The Cytoplasmic segment spans residues 1 to 37 (MLPLSIKDDEYKPPKFNLVRKVSGWIRSIFSDSTSRN). A helical transmembrane segment spans residues 38–58 (LFCFLCLNLSFAFVELFYGIW). Topologically, residues 59–67 (SNSLGLISD) are lumenal. Residues 68 to 88 (SFHMFFDCTALLAGLAASVIS) traverse the membrane as a helical segment. Topologically, residues 89-102 (RWKTNETFSYGYVR) are cytoplasmic. Residues 103 to 123 (AEVLAGFVNGLFLIFTAFFIF) form a helical membrane-spanning segment. Residues 124-140 (SEGIERALDTPEVHHER) are Lumenal-facing. Residues 141–161 (LLPVSIMGFLVNLIGIFVFQH) form a helical membrane-spanning segment. Positions 161–226 (HGGGHGHSHE…GHDHSHKHGH (66 aa)) are his-rich loop. Topologically, residues 162–250 (GGGHGHSHES…KGSSKQILEG (89 aa)) are cytoplasmic. The disordered stretch occupies residues 166–243 (GHSHESGHGH…DEPPEENKGS (78 aa)). Basic residues predominate over residues 187–201 (GHSHSHGGGHGHSHG). 2 stretches are compositionally biased toward basic and acidic residues: residues 202 to 218 (GGHE…EHGH) and 232 to 242 (CHDEPPEENKG). The helical transmembrane segment at 251–271 (VFLHIVADALGSVGVIISTIL) threads the bilayer. The Lumenal segment spans residues 272 to 276 (MQQYG). The helical transmembrane segment at 277–297 (LMIADPICSMLIALLIFVSVI) threads the bilayer. Topologically, residues 298 to 390 (PLLKQSIGIL…LYVQIDLAAM (93 aa)) are cytoplasmic.

It belongs to the cation diffusion facilitator (CDF) transporter (TC 2.A.4) family. SLC30A subfamily. As to quaternary structure, homooligomer.

Its subcellular location is the golgi apparatus membrane. The protein localises to the cytoplasmic vesicle. It is found in the golgi apparatus. It localises to the trans-Golgi network. The protein resides in the sarcoplasmic reticulum. Its subcellular location is the mitochondrion. It carries out the reaction Zn(2+)(in) = Zn(2+)(out). Functionally, zinc ion transporter mediating zinc entry from the cytosol into the lumen of organelles along the secretory pathway. By contributing to zinc ion homeostasis within the early secretory pathway, regulates the activation and folding of enzymes like alkaline phosphatases. The protein is Zinc transporter 7-B (slc30a7-b) of Xenopus laevis (African clawed frog).